Here is a 180-residue protein sequence, read N- to C-terminus: ATP-dependent protease subunit HslV (180 aa).

Threonine 7 is a catalytic residue. 3 residues coordinate Na(+): glycine 165, cysteine 168, and threonine 171.

Belongs to the peptidase T1B family. HslV subfamily. As to quaternary structure, a double ring-shaped homohexamer of HslV is capped on each side by a ring-shaped HslU homohexamer. The assembly of the HslU/HslV complex is dependent on binding of ATP.

Its subcellular location is the cytoplasm. It catalyses the reaction ATP-dependent cleavage of peptide bonds with broad specificity.. Its activity is regulated as follows. Allosterically activated by HslU binding. In terms of biological role, protease subunit of a proteasome-like degradation complex believed to be a general protein degrading machinery. This is ATP-dependent protease subunit HslV from Bacillus anthracis (strain A0248).